A 488-amino-acid chain; its full sequence is Glutamyl-tRNA(Gln) amidotransferase subunit A (488 aa).

Catalysis depends on charge relay system residues Lys-77 and Ser-152. Catalysis depends on Ser-176, which acts as the Acyl-ester intermediate.

It belongs to the amidase family. GatA subfamily. As to quaternary structure, heterotrimer of A, B and C subunits.

The catalysed reaction is L-glutamyl-tRNA(Gln) + L-glutamine + ATP + H2O = L-glutaminyl-tRNA(Gln) + L-glutamate + ADP + phosphate + H(+). Allows the formation of correctly charged Gln-tRNA(Gln) through the transamidation of misacylated Glu-tRNA(Gln) in organisms which lack glutaminyl-tRNA synthetase. The reaction takes place in the presence of glutamine and ATP through an activated gamma-phospho-Glu-tRNA(Gln). The polypeptide is Glutamyl-tRNA(Gln) amidotransferase subunit A (Streptococcus pneumoniae (strain Hungary19A-6)).